Consider the following 452-residue polypeptide: Phosphoglucosamine mutase (452 aa).

The active-site Phosphoserine intermediate is the Ser103. Ser103, Asp243, Asp245, and Asp247 together coordinate Mg(2+). Ser103 bears the Phosphoserine mark.

It belongs to the phosphohexose mutase family. The cofactor is Mg(2+). In terms of processing, activated by phosphorylation.

The catalysed reaction is alpha-D-glucosamine 1-phosphate = D-glucosamine 6-phosphate. In terms of biological role, catalyzes the conversion of glucosamine-6-phosphate to glucosamine-1-phosphate. This Limosilactobacillus fermentum (strain NBRC 3956 / LMG 18251) (Lactobacillus fermentum) protein is Phosphoglucosamine mutase.